The chain runs to 431 residues: Adenylosuccinate synthetase (431 aa).

GTP-binding positions include 12 to 18 (GDEGKGK) and 40 to 42 (GHT). The active-site Proton acceptor is the Asp13. Mg(2+) contacts are provided by Asp13 and Gly40. Residues 13-16 (DEGK), 38-41 (NAGH), Thr129, Arg143, Gln224, Thr239, and Arg303 contribute to the IMP site. His41 functions as the Proton donor in the catalytic mechanism. Residue 299–305 (TVSNRQR) coordinates substrate. GTP-binding positions include Arg305, 331-333 (KLD), and 413-415 (STG).

It belongs to the adenylosuccinate synthetase family. In terms of assembly, homodimer. The cofactor is Mg(2+).

The protein resides in the cytoplasm. It carries out the reaction IMP + L-aspartate + GTP = N(6)-(1,2-dicarboxyethyl)-AMP + GDP + phosphate + 2 H(+). It participates in purine metabolism; AMP biosynthesis via de novo pathway; AMP from IMP: step 1/2. In terms of biological role, plays an important role in the de novo pathway of purine nucleotide biosynthesis. Catalyzes the first committed step in the biosynthesis of AMP from IMP. In Ehrlichia canis (strain Jake), this protein is Adenylosuccinate synthetase.